The chain runs to 372 residues: Dual-specificity RNA methyltransferase RlmN (372 aa).

Glutamate 94 serves as the catalytic Proton acceptor. The Radical SAM core domain occupies 100–339 (DGDRATLCVS…VTIRKTRGDD (240 aa)). Cysteines 107 and 344 form a disulfide. [4Fe-4S] cluster contacts are provided by cysteine 114, cysteine 118, and cysteine 121. S-adenosyl-L-methionine-binding positions include 168-169 (GE), serine 200, 222-224 (SLH), and asparagine 301. The S-methylcysteine intermediate role is filled by cysteine 344.

This sequence belongs to the radical SAM superfamily. RlmN family. [4Fe-4S] cluster is required as a cofactor.

It localises to the cytoplasm. The enzyme catalyses adenosine(2503) in 23S rRNA + 2 reduced [2Fe-2S]-[ferredoxin] + 2 S-adenosyl-L-methionine = 2-methyladenosine(2503) in 23S rRNA + 5'-deoxyadenosine + L-methionine + 2 oxidized [2Fe-2S]-[ferredoxin] + S-adenosyl-L-homocysteine. It catalyses the reaction adenosine(37) in tRNA + 2 reduced [2Fe-2S]-[ferredoxin] + 2 S-adenosyl-L-methionine = 2-methyladenosine(37) in tRNA + 5'-deoxyadenosine + L-methionine + 2 oxidized [2Fe-2S]-[ferredoxin] + S-adenosyl-L-homocysteine. Specifically methylates position 2 of adenine 2503 in 23S rRNA and position 2 of adenine 37 in tRNAs. m2A2503 modification seems to play a crucial role in the proofreading step occurring at the peptidyl transferase center and thus would serve to optimize ribosomal fidelity. This chain is Dual-specificity RNA methyltransferase RlmN, found in Aliivibrio fischeri (strain MJ11) (Vibrio fischeri).